We begin with the raw amino-acid sequence, 157 residues long: Protein Smg (157 aa).

The protein belongs to the Smg family.

This chain is Protein Smg, found in Shigella boydii serotype 4 (strain Sb227).